The primary structure comprises 64 residues: Temporin-ALh (64 aa).

A signal peptide spans 1-22 (MFPLKKSLLLLFFLATINLSLC). A propeptide spanning residues 23–46 (EQERNAEEERRDEPDERNAEVEKR) is cleaved from the precursor. S62 carries the post-translational modification Serine amide.

Belongs to the frog skin active peptide (FSAP) family. Temporin subfamily. In terms of tissue distribution, expressed by the skin glands.

Its subcellular location is the secreted. Its function is as follows. Antimicrobial peptide with activity against Gram-positive and Gram-negative bacteria and against fungi. Has been tested against S.aureus (MIC=2.5 ug/mL), B.pumilus (MIC=7.5 ug/mL), B.cereus (MIC=75.0 ug/mL), E.coli (MIC=5.0 ug/mL), B.dysenteriae (MIC=20.0 ug/mL), A.cacoaceticus (MIC=60.0 ug/mL), P.aeruginosa (MIC=2.5 ug/mL) and C.albicans (MIC=2.5 ug/mL). Also shows a weak hemolytic activity. This Amolops loloensis (Lolokou Sucker Frog) protein is Temporin-ALh.